The primary structure comprises 334 residues: o-succinylbenzoate synthase (334 aa).

Catalysis depends on K107, which acts as the Proton donor. Mg(2+) is bound by residues D135, E162, and D185. The active-site Proton acceptor is the K209.

The protein belongs to the mandelate racemase/muconate lactonizing enzyme family. MenC type 1 subfamily. It depends on a divalent metal cation as a cofactor.

It catalyses the reaction (1R,6R)-6-hydroxy-2-succinyl-cyclohexa-2,4-diene-1-carboxylate = 2-succinylbenzoate + H2O. It functions in the pathway quinol/quinone metabolism; 1,4-dihydroxy-2-naphthoate biosynthesis; 1,4-dihydroxy-2-naphthoate from chorismate: step 4/7. It participates in quinol/quinone metabolism; menaquinone biosynthesis. Converts 2-succinyl-6-hydroxy-2,4-cyclohexadiene-1-carboxylate (SHCHC) to 2-succinylbenzoate (OSB). This Mycobacterium leprae (strain TN) protein is o-succinylbenzoate synthase.